The chain runs to 597 residues: Myrcene synthase, chloroplastic (597 aa).

Residues 1 to 56 constitute a chloroplast transit peptide; the sequence is MALKLLTSLPMYNFSRVPVSSKDPILLVTSRTRNGYLARPVQCMVANKVSTSPDIL. Residues R310, D347, D351, R488, and D491 each contribute to the (2E)-geranyl diphosphate site. Residues D347 and D351 each coordinate Mg(2+). The DDXXD motif motif lies at 347 to 351; it reads DDVYD. Positions 491, 495, and 499 each coordinate Mg(2+).

It belongs to the terpene synthase family. Tpsb subfamily. Mg(2+) is required as a cofactor. It depends on Mn(2+) as a cofactor.

It is found in the plastid. The protein resides in the chloroplast. It catalyses the reaction (2E)-geranyl diphosphate = beta-myrcene + diphosphate. Functionally, involved in monoterpene (C10) biosynthesis. The major product is myrcene followed by minor amounts (1.2%) of the cyclic monoterpene limonene. In Quercus ilex (Holly oak), this protein is Myrcene synthase, chloroplastic.